We begin with the raw amino-acid sequence, 1296 residues long: Phosphoribosylformylglycinamidine synthase (1296 aa).

Residues 300–325 are disordered; sequence APFSGAATGSGGEIRDEGATGRGSKP. ATP is bound by residues 304 to 315 and A675; that span reads GAATGSGGEIRD. Positions 715, 719, and 885 each coordinate Mg(2+). Residue S887 participates in ATP binding. Residues 1043–1296 form the Glutamine amidotransferase type-1 domain; sequence MAILREQGVN…MFRNARKNVG (254 aa). The active-site Nucleophile is the C1136. The interval 1232–1253 is disordered; that stretch reads TQYPANPNGSPEGITGITSTDG. Catalysis depends on residues H1261 and E1263.

The protein in the N-terminal section; belongs to the FGAMS family. In terms of assembly, monomer.

It is found in the cytoplasm. It catalyses the reaction N(2)-formyl-N(1)-(5-phospho-beta-D-ribosyl)glycinamide + L-glutamine + ATP + H2O = 2-formamido-N(1)-(5-O-phospho-beta-D-ribosyl)acetamidine + L-glutamate + ADP + phosphate + H(+). It functions in the pathway purine metabolism; IMP biosynthesis via de novo pathway; 5-amino-1-(5-phospho-D-ribosyl)imidazole from N(2)-formyl-N(1)-(5-phospho-D-ribosyl)glycinamide: step 1/2. In terms of biological role, phosphoribosylformylglycinamidine synthase involved in the purines biosynthetic pathway. Catalyzes the ATP-dependent conversion of formylglycinamide ribonucleotide (FGAR) and glutamine to yield formylglycinamidine ribonucleotide (FGAM) and glutamate. The protein is Phosphoribosylformylglycinamidine synthase of Pseudoalteromonas translucida (strain TAC 125).